The chain runs to 375 residues: MQAVIQTGPGTLQLTENVPKPSVEPGSRKVLVKVHAVALNHSDWKMVDFSAKPGAISGYDMAGVLEAIDDSMNSDLAVGDRVLGVTSIHGGAFAEYVVTDGDLLVKIPENMDFQHAASYGVGIVTTGLALYGNECLALNWPNTDGTGSAAPQKTRVGPRGWSGGDALTDNDNETPRIPVLVYGASTSTGTLAIQLLKLSGYEPIAVCSPHNFGLVQSRGASKCFDYHSQGCGAMIKQYTYNRLEYALDCITTASSMRLCYEAIGATGGKYVSLDPFNARVQRSRADVKPFFCYALTIFGLPIELSGEFARGAKPEDRKLAEKFVKIAEKLIEKGRLKAHPTMLKSGGLGGIASSIDLLRKGKVSGSKLVFDVVGN.

Residues 1–16 (MQAVIQTGPGTLQLTE) are compositionally biased toward polar residues. The tract at residues 1–21 (MQAVIQTGPGTLQLTENVPKP) is disordered. 42–45 (SDWK) contributes to the NADP(+) binding site. Position 121–128 (121–128 (VGIVTTGL)) interacts with substrate. The segment at 147–168 (GSAAPQKTRVGPRGWSGGDALT) is disordered. NADP(+)-binding positions include 185–188 (STST), 208–211 (SPHN), Y226, and 273–274 (LD). 294 to 298 (ALTIF) is a substrate binding site. 363–364 (VS) is a binding site for NADP(+).

This sequence belongs to the zinc-containing alcohol dehydrogenase family. As to quaternary structure, monomer.

Its pathway is polyketide biosynthesis. In terms of biological role, trans-enoyl reductase; part of the gene cluster A that mediates the biosynthesis of botcinic acid and its botcinin derivatives, acetate-derived polyketides that contribute to virulence when combined with the sesquiterpene botrydial. Botcinic acid and its derivatives have been shown to induce chlorosis and necrosis during host plant infection, but also have antifungal activities. Two polyketide synthases, BOA6 and BOA9, are involved in the biosynthesis of botcinins. BOA6 mediates the formation of the per-methylated tetraketide core by condensation of four units of malonyl-CoA with one unit of acetyl-CoA, which would be methylated in activated methylene groups to yield a bicyclic acid intermediate that could then either be converted to botrylactone derivatives or lose the starter acetate unit through a retro-Claisen type C-C bond cleavage to yield botcinin derivatives. The second polyketide synthase, BOA9, is probably required for the biosynthesis of the tetraketide side chain of botcinins. The methyltransferase (MT) domain within BOA6 is probably responsible for the incorporation of four methyl groups. The trans-enoyl reductase BOA5 might take over the enoyl reductase function of BOA6 that misses an ER domain. The monooxygenases BOA2, BOA3 and BOA4 might be involved in further hydroxylations at C4, C5 and C8, whereas BOA7, close to BOA9, could potentially be involved in the hydroxylation at C4 in the side chain of botcinins. The polypeptide is Trans-enoyl reductase BOA5 (Botryotinia fuckeliana (strain B05.10) (Noble rot fungus)).